The primary structure comprises 170 residues: Adenine phosphoribosyltransferase (170 aa).

The protein belongs to the purine/pyrimidine phosphoribosyltransferase family. Homodimer.

It localises to the cytoplasm. The catalysed reaction is AMP + diphosphate = 5-phospho-alpha-D-ribose 1-diphosphate + adenine. Its pathway is purine metabolism; AMP biosynthesis via salvage pathway; AMP from adenine: step 1/1. In terms of biological role, catalyzes a salvage reaction resulting in the formation of AMP, that is energically less costly than de novo synthesis. The polypeptide is Adenine phosphoribosyltransferase (Thermotoga neapolitana (strain ATCC 49049 / DSM 4359 / NBRC 107923 / NS-E)).